A 569-amino-acid polypeptide reads, in one-letter code: Myotubularin-related protein 9 (569 aa).

Residues 134-513 (GWSAFDLEQE…QCIKIWDRLF (380 aa)) form the Myotubularin phosphatase domain.

It belongs to the protein-tyrosine phosphatase family. Non-receptor class myotubularin subfamily. In terms of assembly, heterodimer with lipid phosphatase mtm-6.

It localises to the cytoplasm. The protein resides in the membrane. Its function is as follows. May act as a regulatory subunit for mtm-6. In association with phosphatase mtm-6, plays a role in endosome trafficking probably by regulating phosphatidylinositol-3-phosphate levels. Regulates fluid phase endocytosis in coelomocytes. Regulates posterior migration of QL neuroblast descendants and the anterior migration of QR neuroblast descendants and HSN neurons during larval development probably by controlling Wnt ligand secretion through the regulation of sorting receptor mig-14 trafficking. Involved in the formation of correct synapse number in DA9 motor neurons. This chain is Myotubularin-related protein 9, found in Caenorhabditis elegans.